A 464-amino-acid polypeptide reads, in one-letter code: Zinc transporter 6 (464 aa).

At 1 to 33 the chain is on the cytoplasmic side; that stretch reads MGTIYLFRKTQRSLLGKLTQEFRLVTADRRSWK. A helical membrane pass occupies residues 34–54; sequence ILLFGAINVVCTGFLLTWCSS. The Extracellular portion of the chain corresponds to 55 to 64; sequence TNSMALTAYT. Residues 65 to 85 form a helical membrane-spanning segment; that stretch reads YLTIFDLFSLITCLISYWVMM. The Cytoplasmic portion of the chain corresponds to 86–98; that stretch reads KKPSPTYSFGFER. The helical transmembrane segment at 99 to 119 threads the bilayer; it reads FEVLSVFASTVLAQLGALFIL. Over 120–134 the chain is Extracellular; sequence KESAERFVEQPEIHT. A helical transmembrane segment spans residues 135–155; the sequence is GRLLVGTFVALCFNLFSMLSI. Residues 156-200 lie on the Cytoplasmic side of the membrane; sequence RNKPFAYVSEAASTSWLQEHVADLSRSLCGIIPGLSSIFLPRMNP. A helical membrane pass occupies residues 201-221; that stretch reads FVLIDIAGALALCITYMLIEI. The Extracellular portion of the chain corresponds to 222–228; it reads NNYFAVD. A helical membrane pass occupies residues 229–249; that stretch reads TASAIAIAVMTFGTMYPMSVY. The Cytoplasmic portion of the chain corresponds to 250–464; the sequence is SGKVLLQTTP…TPGQFTQFKQ (215 aa).

The protein belongs to the cation diffusion facilitator (CDF) transporter (TC 2.A.4) family. SLC30A subfamily. As to quaternary structure, heterodimer with SLC30A5; form a functional zinc ion transmembrane transporter.

The protein resides in the golgi apparatus. The protein localises to the trans-Golgi network membrane. Functionally, has probably no intrinsic transporter activity but together with SLC30A5 forms a functional zinc ion:proton antiporter heterodimer, mediating zinc entry into the lumen of organelles along the secretory pathway. As part of that zinc ion:proton antiporter, contributes to zinc ion homeostasis within the early secretory pathway and regulates the activation and folding of enzymes like alkaline phosphatases and enzymes involved in phosphatidylinositol glycan anchor biosynthesis. The protein is Zinc transporter 6 (slc30a6) of Xenopus tropicalis (Western clawed frog).